Reading from the N-terminus, the 348-residue chain is Protein RecA (348 aa).

65-72 (GPESSGKT) serves as a coordination point for ATP.

Belongs to the RecA family.

The protein localises to the cytoplasm. Can catalyze the hydrolysis of ATP in the presence of single-stranded DNA, the ATP-dependent uptake of single-stranded DNA by duplex DNA, and the ATP-dependent hybridization of homologous single-stranded DNAs. It interacts with LexA causing its activation and leading to its autocatalytic cleavage. This chain is Protein RecA, found in Alteromonas mediterranea (strain DSM 17117 / CIP 110805 / LMG 28347 / Deep ecotype).